The chain runs to 685 residues: DNA ligase (685 aa).

NAD(+) is bound by residues 39–43 (DGEYD), 88–89 (SL), and Glu119. Lys121 serves as the catalytic N6-AMP-lysine intermediate. Residues Arg142, Glu182, Lys302, and Lys326 each contribute to the NAD(+) site. Cys420, Cys423, Cys438, and Cys443 together coordinate Zn(2+). Residues 606–685 (DNATFFSEKR…QTFLEHLDRG (80 aa)) form the BRCT domain.

Belongs to the NAD-dependent DNA ligase family. LigA subfamily. Mg(2+) serves as cofactor. It depends on Mn(2+) as a cofactor.

It carries out the reaction NAD(+) + (deoxyribonucleotide)n-3'-hydroxyl + 5'-phospho-(deoxyribonucleotide)m = (deoxyribonucleotide)n+m + AMP + beta-nicotinamide D-nucleotide.. Functionally, DNA ligase that catalyzes the formation of phosphodiester linkages between 5'-phosphoryl and 3'-hydroxyl groups in double-stranded DNA using NAD as a coenzyme and as the energy source for the reaction. It is essential for DNA replication and repair of damaged DNA. This Desulforapulum autotrophicum (strain ATCC 43914 / DSM 3382 / VKM B-1955 / HRM2) (Desulfobacterium autotrophicum) protein is DNA ligase.